The following is a 395-amino-acid chain: MSIVLAYSGGLDTSVAVHWLKERYQTEVIAYCANLGQIEDLEAVSKRATAAGASEVIVEDVRDLFLHDYAIPALAAGAAYEGKYLLAAPLSRPLIAERLVSIARERGASAVAHGATGKGNDQVRFYTSVRALAPELDILAPVIDWEMTSRGSEIAYADRHGIDVGVSKTTPYSIDTNIWGTSIECGDLDLIDHAPPPDAWQITTAPVQAPDRPTTITIEFEAGIPVALDGRKLDLIDLVSELGDTAAANGIGRTEILESRIVGFKSRGIYEAPAATVLLAARTDLEALVLDRETLHHKRSIADQYAELVYYGYWFTDLRAALDAYCARLAHRVTGTVTVELYKGSARCIGRTSPKYGRYSSALADYEEADTFLHEAGAGFAYCWALPLTEGVVTR.

ATP contacts are provided by residues 6–14 and Ala-33; that span reads AYSGGLDTS. Tyr-84 contributes to the L-citrulline binding site. Residue Gly-114 participates in ATP binding. The L-aspartate site is built by Thr-116, Asn-120, and Asp-121. Residue Asn-120 coordinates L-citrulline. L-citrulline-binding residues include Arg-124, Ser-173, Ser-182, Glu-258, and Tyr-270.

The protein belongs to the argininosuccinate synthase family. Type 1 subfamily. As to quaternary structure, homotetramer.

Its subcellular location is the cytoplasm. It carries out the reaction L-citrulline + L-aspartate + ATP = 2-(N(omega)-L-arginino)succinate + AMP + diphosphate + H(+). It functions in the pathway amino-acid biosynthesis; L-arginine biosynthesis; L-arginine from L-ornithine and carbamoyl phosphate: step 2/3. The chain is Argininosuccinate synthase from Rhodococcoides fascians (Rhodococcus fascians).